A 442-amino-acid polypeptide reads, in one-letter code: Transducin beta-like protein 2 (442 aa).

The tract at residues 36–71 (EKPSQPVCQKENEPKKSGSKKQKQNQRVRKEKPQQH) is disordered. Positions 52 to 65 (SGSKKQKQNQRVRK) are enriched in basic residues. WD repeat units lie at residues 84 to 123 (SHSG…QREH), 130 to 170 (VELD…DGGF), 182 to 222 (KHKA…STIN), 224 to 263 (NQMN…GEFQ), 273 to 312 (GHSA…KKQQ), 323 to 362 (EEAS…KEEY), and 366 to 404 (VHGE…RAVV). Residue lysine 164 forms a Glycyl lysine isopeptide (Lys-Gly) (interchain with G-Cter in SUMO2) linkage. Position 428 is a phosphothreonine (threonine 428).

The sequence is that of Transducin beta-like protein 2 (Tbl2) from Mus musculus (Mouse).